The primary structure comprises 376 residues: MKLESDHVIATSDSSDYTSEPTANKLSKRRKKVNYWEKFCSWVTSTENRLYVGWFGVLMIPCVLTAATVFIIAIIAAPPVDMDGIGVPISGSILSGNNIITAAVVPTSAAIGLHFYPIWEAASIDEWLYNGGPYQLIVLHFLIGIIAYQDREWELSYRLGMRPWISLAFTAPVAASVSVLLIYPVGQGSLSAGMPLGISGTFHFMLQFQADHNILMSPLHQLGVIGVLGGAFAAAMHGSLVTSTLIRSHNHSESESINKGYKLGQQHPTYNFRSAQVYLWHLIWQRVSFPNSRKLHFFLAALPVAGIWSAALGVDIAAFDFDYLQFHQPELKSQGQIIHTWADTIDWASLGIKVLDERHIYDFPENLTAGEVVPWK.

Residues 1 to 22 (MKLESDHVIATSDSSDYTSEPT) form a disordered region. Polar residues predominate over residues 11–22 (TSDSSDYTSEPT). A run of 5 helical transmembrane segments spans residues 51–68 (YVGW…TAAT), 140–155 (HFLI…EWEL), 164–178 (WISL…ASVS), 219–240 (LHQL…HGSL), and 298–312 (FLAA…SAAL). His-140 provides a ligand contact to a chlorophyll. His-220 contributes to the a chlorophyll binding site.

Belongs to the reaction center PufL/M/PsbA/D family. In terms of assembly, homodimer.

It is found in the cellular thylakoid membrane. In terms of biological role, synthesizes chlorophyll f or chlorophyllide f (Chl f, 2-formyl chlorophyll a), probably by oxidation of chlorophyll a or chlorophyllide a and reduction of plastoquinone. The reaction is probably light-dependent. Chl f absorbs far red light (FRL, 707 nm in 100% methanol), and is synthesized when cells are grown in FRL, where it provides the advantage of extending the spectral range of harvested light in terrestrial cyanobacteria. When ectopically expressed in Synechococcus PCC 7002 (which does not grow in FRL and does not make Chl f) produces Chl f (0.059% of total chlorophyll). This Chlorogloeopsis fritschii (strain PCC 9212) protein is Light-dependent chlorophyll f synthase.